Here is a 511-residue protein sequence, read N- to C-terminus: Probable cytochrome P450 4d21 (511 aa).

C456 contacts heme.

This sequence belongs to the cytochrome P450 family. The cofactor is heme.

Its subcellular location is the endoplasmic reticulum membrane. It localises to the microsome membrane. Its function is as follows. May be involved in the metabolism of insect hormones and in the breakdown of synthetic insecticides. This Drosophila melanogaster (Fruit fly) protein is Probable cytochrome P450 4d21 (Cyp4d21).